We begin with the raw amino-acid sequence, 127 residues long: S-adenosylmethionine decarboxylase proenzyme (127 aa).

The active-site Schiff-base intermediate with substrate; via pyruvic acid is Ser-63. Ser-63 is modified (pyruvic acid (Ser); by autocatalysis). Residue His-68 is the Proton acceptor; for processing activity of the active site. The active-site Proton donor; for catalytic activity is Cys-83.

Belongs to the prokaryotic AdoMetDC family. Type 1 subfamily. Heterotetramer of two alpha and two beta chains arranged as a dimer of alpha/beta heterodimers. Requires pyruvate as cofactor. In terms of processing, is synthesized initially as an inactive proenzyme. Formation of the active enzyme involves a self-maturation process in which the active site pyruvoyl group is generated from an internal serine residue via an autocatalytic post-translational modification. Two non-identical subunits are generated from the proenzyme in this reaction, and the pyruvate is formed at the N-terminus of the alpha chain, which is derived from the carboxyl end of the proenzyme. The post-translation cleavage follows an unusual pathway, termed non-hydrolytic serinolysis, in which the side chain hydroxyl group of the serine supplies its oxygen atom to form the C-terminus of the beta chain, while the remainder of the serine residue undergoes an oxidative deamination to produce ammonia and the pyruvoyl group blocking the N-terminus of the alpha chain.

The enzyme catalyses S-adenosyl-L-methionine + H(+) = S-adenosyl 3-(methylsulfanyl)propylamine + CO2. It functions in the pathway amine and polyamine biosynthesis; S-adenosylmethioninamine biosynthesis; S-adenosylmethioninamine from S-adenosyl-L-methionine: step 1/1. Catalyzes the decarboxylation of S-adenosylmethionine to S-adenosylmethioninamine (dcAdoMet), the propylamine donor required for the synthesis of the polyamines spermine and spermidine from the diamine putrescine. The sequence is that of S-adenosylmethionine decarboxylase proenzyme from Carboxydothermus hydrogenoformans (strain ATCC BAA-161 / DSM 6008 / Z-2901).